A 1832-amino-acid polypeptide reads, in one-letter code: Zinc finger SWIM domain-containing protein 8 (1832 aa).

Residues S36, S48, and S53 each carry the phosphoserine modification. The segment at 45 to 67 (RKQSAGPNSPTGGGGGGGSGGTR) is disordered. A compositionally biased stretch (gly residues) spans 55–65 (TGGGGGGGSGG). The SWIM-type zinc finger occupies 172-208 (YNVAVMFDRCRVTSCSCTCGAGAKWCTHVVALCLFRI). Phosphoserine occurs at positions 437 and 564. Disordered regions lie at residues 516–722 (PGAS…VGEE), 800–821 (NPPDLKVEPPPAKGKKNKVSTS), and 1018–1216 (SQTH…TVDV). The span at 563–572 (LSAEGGDKAL) shows a compositional bias: basic and acidic residues. Residues 1021 to 1042 (HKPQTLSSFYSSSRPATANQRS) are compositionally biased toward polar residues. Positions 1121–1132 (SRGGYNGRGWGS) are enriched in gly residues. T1141 bears the Phosphothreonine mark. The span at 1146-1161 (IDSSAPETTSDSSPTL) shows a compositional bias: polar residues. S1155, S1158, and S1162 each carry phosphoserine. The span at 1176–1211 (GRGQDSDSISSSSSDSLGSSSSSGSRRASASGGARA) shows a compositional bias: low complexity. S1270 bears the Phosphoserine mark. A compositionally biased stretch (polar residues) spans 1435–1446 (STAREGATSCSG). Residues 1435 to 1465 (STAREGATSCSGSGMRAAGEAGRGLPEGRGA) are disordered. The segment covering 1455–1465 (AGRGLPEGRGA) has biased composition (gly residues). A Phosphoserine modification is found at S1831.

This sequence belongs to the ZSWIM8 family. As to quaternary structure, component of the SCF-like E3 ubiquitin-protein ligase complex which contains CUL3, RBX1, ELOB, ELOC and ZSWIM8. Interacts with DAB1.

Its subcellular location is the cytoplasm. The protein localises to the cytosol. It functions in the pathway protein modification; protein ubiquitination. In terms of biological role, substrate recognition component of a SCF-like E3 ubiquitin-protein ligase complex that promotes target-directed microRNA degradation (TDMD), a process that mediates degradation of microRNAs (miRNAs). The SCF-like E3 ubiquitin-protein ligase complex acts by catalyzing ubiquitination and subsequent degradation of AGO proteins (AGO1, AGO2, AGO3 and/or AGO4), thereby exposing miRNAs for degradation. Specifically recognizes and binds AGO proteins when they are engaged with a TDMD target. May also acts as a regulator of axon guidance: specifically recognizes misfolded ROBO3 and promotes its ubiquitination and subsequent degradation. Plays an essential role for proper embryonic development of heart and lung. Controls protein quality of DAB1, a key signal molecule for brain development, thus protecting its signaling strength. Mechanistically, recognizes intrinsically disordered regions of DAB1 and eliminates misfolded DAB1 that cannot be properly phosphorylated. This chain is Zinc finger SWIM domain-containing protein 8, found in Mus musculus (Mouse).